Here is a 331-residue protein sequence, read N- to C-terminus: Centriolar satellite-associated tubulin polyglutamylase complex regulator 1 (331 aa).

The disordered stretch occupies residues 283-331 (PTSNNNSSSSALGQKEMSKKASPRKSLHQRKRIEMESDGSTEETDSSEN). Residues 303-313 (ASPRKSLHQRK) show a composition bias toward basic residues. The segment covering 318–331 (ESDGSTEETDSSEN) has biased composition (acidic residues).

The protein belongs to the CSTPP1 family. In terms of assembly, interacts with PCM1. Interacts with the complex TPGC. Binds to alpha-tubulin. Expression in elevated in ciliated tissues/organs, including brain, spinal cord, kidney, eyes, ears and lateral line.

It is found in the cytoplasm. The protein resides in the cytoskeleton. Its subcellular location is the microtubule organizing center. The protein localises to the centrosome. It localises to the centriolar satellite. Its function is as follows. Regulator of the tubulin polyglutamylase complex (TPGC) that controls cytoskeletal organization, nuclear shape, and cilium disassembly by balancing microtubule and actin assembly. Regulates the assembly and stability of the TPGC and thereby modulates polyglutamylation of the microtubule, which antagonizes MAP4 binding. The protein is Centriolar satellite-associated tubulin polyglutamylase complex regulator 1 (cstpp1) of Danio rerio (Zebrafish).